A 163-amino-acid polypeptide reads, in one-letter code: Neurotrophin-3 (163 aa).

The first 3 residues, 1 to 3, serve as a signal peptide directing secretion; it reads IQS. The propeptide occupies 4-119; sequence TSMDQGILTE…VLNRTSRRKR (116 aa). Asn-112 is a glycosylation site (N-linked (GlcNAc...) asparagine).

It belongs to the NGF-beta family.

It localises to the secreted. Functionally, seems to promote the survival of visceral and proprioceptive sensory neurons. This Chilabothrus striatus (Haitian boa constrictor) protein is Neurotrophin-3 (NTF3).